Here is a 49-residue protein sequence, read N- to C-terminus: Large ribosomal subunit protein bL33A (49 aa).

This sequence belongs to the bacterial ribosomal protein bL33 family.

This chain is Large ribosomal subunit protein bL33A, found in Staphylococcus haemolyticus (strain JCSC1435).